Consider the following 205-residue polypeptide: Ribosomal RNA small subunit methyltransferase G (205 aa).

S-adenosyl-L-methionine is bound by residues Gly73, Leu78, Val124–Glu125, and Arg139.

The protein belongs to the methyltransferase superfamily. RNA methyltransferase RsmG family.

It localises to the cytoplasm. It carries out the reaction guanosine(527) in 16S rRNA + S-adenosyl-L-methionine = N(7)-methylguanosine(527) in 16S rRNA + S-adenosyl-L-homocysteine. Its function is as follows. Specifically methylates the N7 position of guanine in position 527 of 16S rRNA. The protein is Ribosomal RNA small subunit methyltransferase G of Methylobacillus flagellatus (strain ATCC 51484 / DSM 6875 / VKM B-1610 / KT).